The primary structure comprises 440 residues: MRCEVAPVLTGTPLLPATPPGPVLLAYSGGMDSSVLLHLLAARPRYRHAGLRALHVHHGLHADADAWAAHCQRTCDALQVPLQIVRVQVARDSGLGLEAAARNARHAAFAQALIAGEWLALAHHRDDQAETFLLRALRASGPEGLAAMRPQRPFASGTLWRPMLAHARADLLAYAHAHRLRWIDDPSNTDPRHDRNFLRSQVLPLLQQRWPQATDALARSAQLSADASALLLQQDMALLPGVLTASGALDLQALRAQSVERRARLLRAWVSAAHAPPLPAHGVAALEQEIDNHAADRHACFAWQQVEVRRWRQCLFLHRPAAAWPSDWHAQWDGAAPLQLPDGAQLRLLGAPGLRFAQPLLVRARQGGERIVLPQRGHSHQLKHLLQALDLPPWERERLPVLWEGAQVLAAGDCIISGTLDAWLQANAAALQWRTAADAN.

Residue 28–33 (SGGMDS) coordinates ATP.

Belongs to the tRNA(Ile)-lysidine synthase family.

It localises to the cytoplasm. It catalyses the reaction cytidine(34) in tRNA(Ile2) + L-lysine + ATP = lysidine(34) in tRNA(Ile2) + AMP + diphosphate + H(+). Functionally, ligates lysine onto the cytidine present at position 34 of the AUA codon-specific tRNA(Ile) that contains the anticodon CAU, in an ATP-dependent manner. Cytidine is converted to lysidine, thus changing the amino acid specificity of the tRNA from methionine to isoleucine. This is tRNA(Ile)-lysidine synthase from Xanthomonas axonopodis pv. citri (strain 306).